A 276-amino-acid polypeptide reads, in one-letter code: MAVKIYKRTTNGRRNMSVLTFDEITTSTPEKSLLAPITKTGGRNNQGKLTVRHIGGGAKRKYRIIDFKRDKDNVPGKVTSIEYDPNRTANIALITYLDGEKRYIIAPKGLQVGALIVSGSEIDIKVGNALPVMSIPVGTIVHNIELKPGRGGQIARSAGTSAQILGREEKYVLVRLQSGEVRRILGTCKATIGEVGNESHELVRIGKAGRTRHLGVRPTVRGSVMNPNDHPHGGGEGKQPIGRKQQMTPWGKKARGIKTRDKKKASTSMIVRRRNG.

Residues 219–276 (TVRGSVMNPNDHPHGGGEGKQPIGRKQQMTPWGKKARGIKTRDKKKASTSMIVRRRNG) form a disordered region. Residues 252–276 (KKARGIKTRDKKKASTSMIVRRRNG) are compositionally biased toward basic residues.

Belongs to the universal ribosomal protein uL2 family. Part of the 50S ribosomal subunit. Forms a bridge to the 30S subunit in the 70S ribosome.

One of the primary rRNA binding proteins. Required for association of the 30S and 50S subunits to form the 70S ribosome, for tRNA binding and peptide bond formation. It has been suggested to have peptidyltransferase activity; this is somewhat controversial. Makes several contacts with the 16S rRNA in the 70S ribosome. This is Large ribosomal subunit protein uL2 from Acholeplasma laidlawii (strain PG-8A).